A 264-amino-acid polypeptide reads, in one-letter code: tRNA pseudouridine synthase A (264 aa).

The active-site Nucleophile is aspartate 51. A substrate-binding site is contributed by tyrosine 109.

It belongs to the tRNA pseudouridine synthase TruA family. As to quaternary structure, homodimer.

It catalyses the reaction uridine(38/39/40) in tRNA = pseudouridine(38/39/40) in tRNA. Functionally, formation of pseudouridine at positions 38, 39 and 40 in the anticodon stem and loop of transfer RNAs. The polypeptide is tRNA pseudouridine synthase A (Vibrio campbellii (strain ATCC BAA-1116)).